A 379-amino-acid chain; its full sequence is Tryptophan 2,3-dioxygenase (379 aa).

Substrate is bound by residues 57–61 (FIITH) and Arg-128. Position 312 (His-312) interacts with heme. Thr-327 is a binding site for substrate.

This sequence belongs to the tryptophan 2,3-dioxygenase family. In terms of assembly, homotetramer. Dimer of dimers. The cofactor is heme.

The catalysed reaction is L-tryptophan + O2 = N-formyl-L-kynurenine. The protein operates within amino-acid degradation; L-tryptophan degradation via kynurenine pathway; L-kynurenine from L-tryptophan: step 1/2. It participates in pigment biosynthesis; ommochrome biosynthesis. Heme-dependent dioxygenase that catalyzes the oxidative cleavage of the L-tryptophan (L-Trp) pyrrole ring and converts L-tryptophan to N-formyl-L-kynurenine. Catalyzes the oxidative cleavage of the indole moiety. This Drosophila sechellia (Fruit fly) protein is Tryptophan 2,3-dioxygenase.